Here is a 411-residue protein sequence, read N- to C-terminus: Carbohydrate sulfotransferase 1 (411 aa).

Residues methionine 1 to glutamine 2 are Cytoplasmic-facing. Residues cysteine 3–isoleucine 23 traverse the membrane as a helical; Signal-anchor for type II membrane protein segment. The Lumenal portion of the chain corresponds to arginine 24–leucine 411. Asparagine 56 is a glycosylation site (N-linked (GlcNAc...) asparagine). Threonine 69–phenylalanine 75 provides a ligand contact to 3'-phosphoadenylyl sulfate. 2 N-linked (GlcNAc...) asparagine glycosylation sites follow: asparagine 145 and asparagine 189. Arginine 234–serine 242 contacts 3'-phosphoadenylyl sulfate. N-linked (GlcNAc...) asparagine glycosylation occurs at asparagine 334. Positions arginine 337–aspartate 339 match the Cell attachment site motif.

It belongs to the sulfotransferase 1 family. Gal/GlcNAc/GalNAc subfamily. Broadly expressed with highest levels in central nervous system. Expressed in cortex (at protein level). Expressed in high endothelial venules in peripheral lymph nodes, mesenteric lymph nodes and Peyer's patches.

The protein localises to the golgi apparatus membrane. The catalysed reaction is 3'-phosphoadenylyl sulfate + keratan = adenosine 3',5'-bisphosphate + keratan 6'-sulfate.. Its pathway is glycan metabolism. Sulfotransferase that utilizes 3'-phospho-5'-adenylyl sulfate (PAPS) as sulfonate donor to catalyze the transfer of sulfate to position 6 of internal galactose (Gal) residues of keratan. Cooperates with B4GALT4 and B3GNT7 glycosyltransferases and CHST6 sulfotransferase to construct and elongate disulfated disaccharide unit [-&gt;3(6-sulfoGalbeta)1-&gt;4(6-sulfoGlcNAcbeta)1-&gt;] within keratan sulfate polymer. Has a preference for sulfating keratan sulfate, but it also transfers sulfate to the unsulfated polymer. Involved in biosynthesis of phosphacan, a major keratan sulfate proteoglycan in the developing brain. Involved in biosynthesis of 6-sulfoGalbeta-containing O-linked glycans in high endothelial venules of lymph nodes. May act in a synergistic manner with CHST4 to generate sialyl 6',6-disulfo Lewis X motif, a recognition determinant for immune cell receptors implicated in leukocyte trafficking. Catalyzes sulfation of N-acetyllactosamine (LacNAc) oligosaccharides with highest efficiency for sialylated LacNAc structures. The protein is Carbohydrate sulfotransferase 1 (Chst1) of Mus musculus (Mouse).